We begin with the raw amino-acid sequence, 293 residues long: Methylsterol monooxygenase 1 (293 aa).

2 consecutive transmembrane segments (helical) span residues leucine 55–isoleucine 75 and valine 100–threonine 120. The Fatty acid hydroxylase domain maps to cysteine 145 to threonine 274. The Histidine box-1 motif lies at histidine 157–histidine 161. Residues histidine 170–histidine 174 carry the Histidine box-2 motif. Residues phenylalanine 199–isoleucine 219 form a helical membrane-spanning segment. Positions histidine 249 to methionine 255 match the Histidine box-3 motif.

Belongs to the sterol desaturase family. Fe cation serves as cofactor. Post-translationally, ubiquitinated by MARCHF6, leading to proteasomal degradation.

Its subcellular location is the endoplasmic reticulum membrane. The catalysed reaction is 4,4-dimethyl-5alpha-cholest-7-en-3beta-ol + 6 Fe(II)-[cytochrome b5] + 3 O2 + 5 H(+) = 4alpha-carboxy-4beta-methyl-5alpha-cholest-7-ene-3beta-ol + 6 Fe(III)-[cytochrome b5] + 4 H2O. It carries out the reaction 4,4-dimethyl-5alpha-cholesta-8,24-dien-3beta-ol + 6 Fe(II)-[cytochrome b5] + 3 O2 + 5 H(+) = 4beta-methylzymosterol-4alpha-carboxylate + 6 Fe(III)-[cytochrome b5] + 4 H2O. The enzyme catalyses 4alpha-methylzymosterol + 6 Fe(II)-[cytochrome b5] + 3 O2 + 5 H(+) = 4alpha-carboxyzymosterol + 6 Fe(III)-[cytochrome b5] + 4 H2O. It catalyses the reaction 4alpha-methyl-5alpha-cholest-7-en-3beta-ol + 6 Fe(II)-[cytochrome b5] + 3 O2 + 5 H(+) = 4alpha-carboxy-5alpha-cholest-7-en-3beta-ol + 6 Fe(III)-[cytochrome b5] + 4 H2O. The catalysed reaction is 4,4-dimethyl-5alpha-cholest-8-en-3beta-ol + 6 Fe(II)-[cytochrome b5] + 3 O2 + 5 H(+) = 4alpha-carboxy-4beta-methyl-5alpha-cholest-8-en-3beta-ol + 6 Fe(III)-[cytochrome b5] + 4 H2O. It carries out the reaction 4alpha-methyl-5alpha-cholest-8-en-3beta-ol + 6 Fe(II)-[cytochrome b5] + 3 O2 + 5 H(+) = 4alpha-carboxy-5alpha-cholest-8-ene-3beta-ol + 6 Fe(III)-[cytochrome b5] + 4 H2O. Its pathway is steroid biosynthesis; zymosterol biosynthesis; zymosterol from lanosterol: step 3/6. It participates in steroid biosynthesis; cholesterol biosynthesis. In terms of biological role, catalyzes the three-step monooxygenation required for the demethylation of 4,4-dimethyl and 4alpha-methylsterols, which can be subsequently metabolized to cholesterol. The chain is Methylsterol monooxygenase 1 (MSMO1) from Macaca fascicularis (Crab-eating macaque).